A 242-amino-acid polypeptide reads, in one-letter code: Terpene cyclase dpchB (242 aa).

Transmembrane regions (helical) follow at residues 16–36, 51–71, 78–95, 114–134, 141–161, 169–189, and 207–227; these read VVWIADTCKLIMGIGWTANYV, ALLPLCCNFAWELTYAIMYAF, YVHFSGLLLNCGVMYTAV, LIFVLAVAGFASAHVVLAKQV, AWSAYACQLLLSVGGLCQLLC, SYFLWFSRFFGSLVLVPQDII, and IWFVTIFLILDGSYGLCLWYV.

Belongs to the paxB family.

It is found in the membrane. It functions in the pathway secondary metabolite biosynthesis; terpenoid biosynthesis. Its function is as follows. Terpene cyclase; part of the gene cluster that mediates the biosynthesis of the diterpenoid pyrones higginsianins A and B. The first step of the pathway is the synthesis of the alpha-pyrone moiety by the polyketide synthase dpchA via condensation of one acetyl-CoA starter unit with 3 malonyl-CoA units and 2 methylations. The alpha-pyrone is then combined with geranylgeranyl pyrophosphate (GGPP) formed by the GGPP synthase dpchD through the action of the prenyltransferase dpchC to yield a linear alpha-pyrone diterpenoid. Subsequent steps in the diterpenoid pyrone biosynthetic pathway involve the decalin core formation, which is initiated by the epoxidation of the C10-C11 olefin by the FAD-dependent oxidoreductase dpchE, and is followed by a cyclization cascade catalyzed by the terpene cyclase dpchB. The short chain dehydrogenase/reductase dpchG then oxidizes the 8S hydroxy group to a ketone and the short chain dehydrogenase/reductase dpchH reduces the ketone to the 8R hydroxy group to yield higginsianin B. Finally, the FAD-dependent oxidoreductase dpchF converts higginsianin B into higginsianin A. In Colletotrichum higginsianum (strain IMI 349063) (Crucifer anthracnose fungus), this protein is Terpene cyclase dpchB.